The chain runs to 238 residues: Phosphoribosylaminoimidazole-succinocarboxamide synthase (238 aa).

The protein belongs to the SAICAR synthetase family.

The catalysed reaction is 5-amino-1-(5-phospho-D-ribosyl)imidazole-4-carboxylate + L-aspartate + ATP = (2S)-2-[5-amino-1-(5-phospho-beta-D-ribosyl)imidazole-4-carboxamido]succinate + ADP + phosphate + 2 H(+). The protein operates within purine metabolism; IMP biosynthesis via de novo pathway; 5-amino-1-(5-phospho-D-ribosyl)imidazole-4-carboxamide from 5-amino-1-(5-phospho-D-ribosyl)imidazole-4-carboxylate: step 1/2. This is Phosphoribosylaminoimidazole-succinocarboxamide synthase from Desulfitobacterium hafniense (strain DSM 10664 / DCB-2).